Here is a 129-residue protein sequence, read N- to C-terminus: Large ribosomal subunit protein bL12 (129 aa).

This sequence belongs to the bacterial ribosomal protein bL12 family. As to quaternary structure, homodimer. Part of the ribosomal stalk of the 50S ribosomal subunit. Forms a multimeric L10(L12)X complex, where L10 forms an elongated spine to which 2 to 4 L12 dimers bind in a sequential fashion. Binds GTP-bound translation factors.

Forms part of the ribosomal stalk which helps the ribosome interact with GTP-bound translation factors. Is thus essential for accurate translation. This chain is Large ribosomal subunit protein bL12, found in Pseudothermotoga lettingae (strain ATCC BAA-301 / DSM 14385 / NBRC 107922 / TMO) (Thermotoga lettingae).